A 195-amino-acid chain; its full sequence is O-methyltransferase (195 aa).

Belongs to the methyltransferase superfamily.

It functions in the pathway secondary metabolite biosynthesis. Its function is as follows. O-methyltransferase; part of the gene cluster that mediates the biosynthesis of pyrophen and campyrone B, which represent a class of fungal amino acid-derived alpha-pyrone natural products. The first step of pyrophen biosynthesis is catalyzed by the PKS-NRPS hybrid synthetase ATPKS that uptakes and condensates L-phenylalanine and malonyl-CoA in order to produce desmethyldesacetylpyrophen. Although the A domain does not discriminate between 2 enantiomeric phenylalanines, the downstream KS domain must play a gate keeping role to stereoselectively accept the L-phenylalanyl-S-phosphopantetheine (Ppant)-T domain intermediate for chain elongation. The resulting amino acid derived diketide is off-loaded through lactonization to yield the alpha-pyrone intermediate desmethyldesacetylpyrophen. The cluster-specific O-methyltransferase (OMT) then methylates desmethyldesacetylpyrophen to desacetylpyrophen, which is further acetylated to pyrophen by an endogenous yet unidentified N-acetyltransferase. ATPKS has relaxed substrate specificity to activate and extend branched-chain amino acid L-leucine to produce small amounts of campyrone B. The protein is O-methyltransferase of Aspergillus niger (strain ATCC 1015 / CBS 113.46 / FGSC A1144 / LSHB Ac4 / NCTC 3858a / NRRL 328 / USDA 3528.7).